The chain runs to 187 residues: DNA-3-methyladenine glycosylase 1 (187 aa).

Residues C4, H17, H175, and C179 each contribute to the Zn(2+) site.

It catalyses the reaction Hydrolysis of alkylated DNA, releasing 3-methyladenine.. Its activity is regulated as follows. Activity is controlled by product inhibition. Functionally, hydrolysis of the deoxyribose N-glycosidic bond to excise 3-methyladenine from the damaged DNA polymer formed by alkylation lesions. The chain is DNA-3-methyladenine glycosylase 1 from Escherichia coli (strain K12).